We begin with the raw amino-acid sequence, 315 residues long: tRNA pseudouridine synthase B (315 aa).

Residue Asp-54 is the Nucleophile of the active site.

It belongs to the pseudouridine synthase TruB family. Type 1 subfamily.

It carries out the reaction uridine(55) in tRNA = pseudouridine(55) in tRNA. Its function is as follows. Responsible for synthesis of pseudouridine from uracil-55 in the psi GC loop of transfer RNAs. The polypeptide is tRNA pseudouridine synthase B (Cupriavidus pinatubonensis (strain JMP 134 / LMG 1197) (Cupriavidus necator (strain JMP 134))).